Here is a 198-residue protein sequence, read N- to C-terminus: Glycerol-3-phosphate acyltransferase (198 aa).

The next 5 membrane-spanning stretches (helical) occupy residues 1 to 21 (MILITSLAVLVSYLIGSIPAA), 52 to 72 (GPALLVAAFDILKGAIAVGLA), 81 to 101 (WTALCGVAAVLGHNFSPFLGF), 115 to 135 (LALDPVVGGGAFVVGVGCIWL), and 153 to 173 (LAAALARPGWLLLIVAFLAAL).

Belongs to the PlsY family. In terms of assembly, probably interacts with PlsX.

Its subcellular location is the cell membrane. The enzyme catalyses an acyl phosphate + sn-glycerol 3-phosphate = a 1-acyl-sn-glycero-3-phosphate + phosphate. It participates in lipid metabolism; phospholipid metabolism. Its function is as follows. Catalyzes the transfer of an acyl group from acyl-phosphate (acyl-PO(4)) to glycerol-3-phosphate (G3P) to form lysophosphatidic acid (LPA). This enzyme utilizes acyl-phosphate as fatty acyl donor, but not acyl-CoA or acyl-ACP. This Deinococcus geothermalis (strain DSM 11300 / CIP 105573 / AG-3a) protein is Glycerol-3-phosphate acyltransferase.